A 508-amino-acid polypeptide reads, in one-letter code: Small ribosomal subunit protein uS3m (508 aa).

This sequence belongs to the universal ribosomal protein uS3 family. Component of the mitochondrial small ribosomal subunit (mt-SSU). Mature N.crassa 74S mitochondrial ribosomes consist of a small (37S) and a large (54S) subunit. The 37S small subunit contains a 16S ribosomal RNA (16S mt-rRNA) and 32 different proteins. The 54S large subunit contains a 23S rRNA (23S mt-rRNA) and 42 different proteins. uS3m, uS4m and uS5m form the narrow entry site of the mRNA channel.

The protein localises to the mitochondrion. Component of the mitochondrial ribosome (mitoribosome), a dedicated translation machinery responsible for the synthesis of mitochondrial genome-encoded proteins, including at least some of the essential transmembrane subunits of the mitochondrial respiratory chain. The mitoribosomes are attached to the mitochondrial inner membrane and translation products are cotranslationally integrated into the membrane. uS3m is essential for mitochondrial protein synthesis and required for the maturation of small ribosomal subunits. This Neurospora crassa (strain ATCC 24698 / 74-OR23-1A / CBS 708.71 / DSM 1257 / FGSC 987) protein is Small ribosomal subunit protein uS3m (var1).